Consider the following 204-residue polypeptide: Guanylate kinase (204 aa).

The Guanylate kinase-like domain occupies 18–198 (GKLIIFSAPS…AKAETLEVIK (181 aa)). 25–32 (APSGSGKS) serves as a coordination point for ATP.

It belongs to the guanylate kinase family.

It is found in the cytoplasm. It carries out the reaction GMP + ATP = GDP + ADP. Essential for recycling GMP and indirectly, cGMP. This Bacteroides thetaiotaomicron (strain ATCC 29148 / DSM 2079 / JCM 5827 / CCUG 10774 / NCTC 10582 / VPI-5482 / E50) protein is Guanylate kinase.